A 293-amino-acid chain; its full sequence is uncharacterized protein (293 aa).

Residues 55–77 (IVLAKEIFAVAFFSLGMSCLLMA) form a helical membrane-spanning segment.

The protein localises to the membrane. This is an uncharacterized protein from Caenorhabditis elegans.